The following is a 374-amino-acid chain: MPRPIQATIHTAALRHNLARARLAAPDAKVWAIVKANAYGHGIERVFEGLRAADGFALLDLDEAQRVRALGWRGPILLLEGVFELRDLELCSRLDLWHTVHCDEQIDMLASHKTKVAQRVFLKMNSGMNRLGFTPQRYRAAWTRLNALPQVDEISLITHFSDADGARGITEQMAVFAEVTRDLPGERTLSNSAATLLHTPARQPGDGFVASDWVRPGIAIYGSAPDFPQHSATDWGLQPSMTLTAKIIATQTVDTGASVGYGSTFVADKPIQVGVVACGYADGYPRLCPTGTPVLVNGIRTRTVGRVSMDMLAVDLSAVTAAGGQVGIGSEVTLWGRAANGLVLGIDEVAQPAGTVGYELMCALAPRVPVLVAD.

K35 acts as the Proton acceptor; specific for D-alanine in catalysis. At K35 the chain carries N6-(pyridoxal phosphate)lysine. Substrate is bound at residue R130. Y261 functions as the Proton acceptor; specific for L-alanine in the catalytic mechanism. M309 is a substrate binding site.

The protein belongs to the alanine racemase family. The cofactor is pyridoxal 5'-phosphate.

It catalyses the reaction L-alanine = D-alanine. It participates in amino-acid biosynthesis; D-alanine biosynthesis; D-alanine from L-alanine: step 1/1. In terms of biological role, catalyzes the interconversion of L-alanine and D-alanine. May also act on other amino acids. The protein is Alanine racemase (alr) of Albidiferax ferrireducens (strain ATCC BAA-621 / DSM 15236 / T118) (Rhodoferax ferrireducens).